The chain runs to 572 residues: Proline--tRNA ligase (572 aa).

It belongs to the class-II aminoacyl-tRNA synthetase family. ProS type 1 subfamily. As to quaternary structure, homodimer.

It is found in the cytoplasm. The catalysed reaction is tRNA(Pro) + L-proline + ATP = L-prolyl-tRNA(Pro) + AMP + diphosphate. In terms of biological role, catalyzes the attachment of proline to tRNA(Pro) in a two-step reaction: proline is first activated by ATP to form Pro-AMP and then transferred to the acceptor end of tRNA(Pro). As ProRS can inadvertently accommodate and process non-cognate amino acids such as alanine and cysteine, to avoid such errors it has two additional distinct editing activities against alanine. One activity is designated as 'pretransfer' editing and involves the tRNA(Pro)-independent hydrolysis of activated Ala-AMP. The other activity is designated 'posttransfer' editing and involves deacylation of mischarged Ala-tRNA(Pro). The misacylated Cys-tRNA(Pro) is not edited by ProRS. The chain is Proline--tRNA ligase from Yersinia pseudotuberculosis serotype IB (strain PB1/+).